The following is a 527-amino-acid chain: Phosphoenolpyruvate carboxykinase (ATP) (527 aa).

Residues Arg-55, Tyr-191, and Lys-197 each contribute to the substrate site. ATP-binding positions include Lys-197, His-216, and 232-240 (GLSGTGKTT). Lys-197 and His-216 together coordinate Mn(2+). Asp-253 lines the Mn(2+) pocket. The ATP site is built by Glu-281, Arg-318, and Thr-443. Arg-318 contributes to the substrate binding site.

This sequence belongs to the phosphoenolpyruvate carboxykinase (ATP) family. Mn(2+) is required as a cofactor.

The protein localises to the cytoplasm. It carries out the reaction oxaloacetate + ATP = phosphoenolpyruvate + ADP + CO2. The protein operates within carbohydrate biosynthesis; gluconeogenesis. Its function is as follows. Involved in the gluconeogenesis. Catalyzes the conversion of oxaloacetate (OAA) to phosphoenolpyruvate (PEP) through direct phosphoryl transfer between the nucleoside triphosphate and OAA. This chain is Phosphoenolpyruvate carboxykinase (ATP), found in Brevibacillus brevis (strain 47 / JCM 6285 / NBRC 100599).